A 129-amino-acid chain; its full sequence is uncharacterized protein (129 aa).

This is an uncharacterized protein from Sinorhizobium fredii (strain NBRC 101917 / NGR234).